We begin with the raw amino-acid sequence, 78 residues long: UPF0291 protein MCCL_0996 (78 aa).

This sequence belongs to the UPF0291 family.

It localises to the cytoplasm. This Macrococcus caseolyticus (strain JCSC5402) (Macrococcoides caseolyticum) protein is UPF0291 protein MCCL_0996.